Reading from the N-terminus, the 480-residue chain is Porphobilinogen deaminase, chloroplastic (480 aa).

The transit peptide at 1-139 (MYCGRYETIG…VSGGRIWSLA (139 aa)) directs the protein to the chloroplast. S-(dipyrrolylmethanemethyl)cysteine is present on C395.

Belongs to the HMBS family. The cofactor is dipyrromethane.

The protein localises to the plastid. The protein resides in the chloroplast. The enzyme catalyses 4 porphobilinogen + H2O = hydroxymethylbilane + 4 NH4(+). The protein operates within porphyrin-containing compound metabolism; protoporphyrin-IX biosynthesis; coproporphyrinogen-III from 5-aminolevulinate: step 2/4. It participates in porphyrin-containing compound metabolism; chlorophyll biosynthesis. Tetrapolymerization of the monopyrrole PBG into the hydroxymethylbilane pre-uroporphyrinogen in several discrete steps. The polypeptide is Porphobilinogen deaminase, chloroplastic (Euglena gracilis).